The chain runs to 1640 residues: Clathrin heavy chain 2 (1640 aa).

Alanine 2 bears the N-acetylalanine mark. Residues 2–479 (AQILPVRFQE…TDPMLALSVY (478 aa)) are globular terminal domain. WD40-like repeat stretches follow at residues 24 to 67 (NIGF…RPIS), 68 to 107 (AESA…MAEE), 108 to 149 (VIFW…TSLV), 150 to 195 (GCQV…QPIE), 196 to 257 (GHAA…PEAQ), 258 to 301 (NDFP…ISAD), and 302 to 330 (TIFV…VCVE). Phosphoserine is present on serine 67. Tyrosine 184 is subject to Phosphotyrosine. Threonine 394 bears the Phosphothreonine mark. The binding site for the uncoating ATPase, involved in lattice disassembly stretch occupies residues 449 to 465 (EKWLKEDKLECSEELGD). The interval 480–523 (LRANVPSKVIQCFAETGQFQKIVLYAKKVGYTPDWIFLLRGVMK) is flexible linker. The segment at 524-634 (ISPEQGLQFS…QALEHYTDLY (111 aa)) is distal segment. The segment at 524–1640 (ISPEQGLQFS…PLVFDFDGHE (1117 aa)) is heavy chain arm. CHCR repeat units follow at residues 537-683 (VQDE…QLCV), 686-828 (ASKY…SEEV), 833-972 (IMAV…QLID), 979-1124 (LSET…VKEA), 1128-1269 (YIRG…FRFA), 1274-1420 (LHIV…LLIN), and 1423-1566 (LLVL…RECF). The residue at position 634 (tyrosine 634) is a Phosphotyrosine. The proximal segment stretch occupies residues 639–1640 (AVVHTHLLNP…PLVFDFDGHE (1002 aa)). The residue at position 737 (lysine 737) is an N6-succinyllysine. Lysine 856 is subject to N6-acetyllysine. The residue at position 899 (tyrosine 899) is a Phosphotyrosine. Serine 1167 carries the phosphoserine modification. Tyrosine 1206 is modified (phosphotyrosine). The interval 1213–1522 (AAKLLYSNVS…YLYKGNNWWA (310 aa)) is involved in binding clathrin light chain. The residue at position 1229 (serine 1229) is a Phosphoserine. Lysine 1441 is modified (N6-acetyllysine; alternate). Lysine 1441 is modified (N6-succinyllysine; alternate). Residues tyrosine 1477 and tyrosine 1487 each carry the phosphotyrosine modification. Position 1494 is a phosphoserine (serine 1494). N6-acetyllysine is present on lysine 1501. Positions 1551–1640 (QKLLQWFLEE…PLVFDFDGHE (90 aa)) are trimerization.

The protein belongs to the clathrin heavy chain family. Clathrin triskelions, composed of 3 heavy chains and 3 light chains, are the basic subunits of the clathrin coat. In the presence of light chains, hub assembly is influenced by both the pH and the concentration of calcium. May interact with OCRL. Interacts with AFTPH/aftiphilin. In terms of tissue distribution, maximal levels in skeletal muscle. High levels in heart and testis. Low expression detected in all other tissues.

It localises to the cytoplasmic vesicle membrane. The protein localises to the membrane. The protein resides in the coated pit. Clathrin is the major protein of the polyhedral coat of coated pits and vesicles. Two different adapter protein complexes link the clathrin lattice either to the plasma membrane or to the trans-Golgi network. This Homo sapiens (Human) protein is Clathrin heavy chain 2 (CLTCL1).